Reading from the N-terminus, the 477-residue chain is RTX-III toxin determinant D (477 aa).

The Cytoplasmic segment spans residues 1-59; that stretch reads MKLWILGLGEFFQRYRNIWREIWKIRKQLDTPARQKDENEFLPRHLELIETPISKKPRL. A helical transmembrane segment spans residues 60–77; the sequence is IAYLIMLFLFLAIVISII. At 78–477 the chain is on the periplasmic side; that stretch reads SKVEIVASAT…ESITESLRER (400 aa).

This sequence belongs to the membrane fusion protein (MFP) (TC 8.A.1) family.

Its subcellular location is the cell inner membrane. Functionally, involved in the transport of the toxin RTX-III. This Actinobacillus pleuropneumoniae (Haemophilus pleuropneumoniae) protein is RTX-III toxin determinant D (apxIIID).